Reading from the N-terminus, the 164-residue chain is UPF0114 protein Sbal_0780 (164 aa).

4 helical membrane passes run 15 to 35 (IMAP…VKFF), 53 to 73 (LVLL…IVMV), 109 to 129 (VAAS…MNAE), and 136 to 156 (IMWY…MGYL).

Belongs to the UPF0114 family.

It localises to the cell membrane. The chain is UPF0114 protein Sbal_0780 from Shewanella baltica (strain OS155 / ATCC BAA-1091).